A 635-amino-acid polypeptide reads, in one-letter code: Sodium- and chloride-dependent creatine transporter 1 (635 aa).

The disordered stretch occupies residues 1–27; that stretch reads MAKKSAENGIYSVSGDEKKGPLIVSGP. Over 1-60 the chain is Cytoplasmic; it reads MAKKSAENGIYSVSGDEKKGPLIVSGPDGAPAKGDGPAGLGAPGGRLAVPPRETWTRQMD. A helical membrane pass occupies residues 61-81; the sequence is FIMSCVGFAVGLGNVWRFPYL. Topologically, residues 82–87 are extracellular; the sequence is CYKNGG. A helical transmembrane segment spans residues 88-108; that stretch reads GVFLIPYVLIALVGGIPIFFL. The Cytoplasmic segment spans residues 109–138; that stretch reads EISLGQFMKAGSINVWNICPLFKGLGYASM. Residues 139–159 form a helical membrane-spanning segment; sequence VIVFYCNTYYIMVLAWGFYYL. The Extracellular portion of the chain corresponds to 160-230; the sequence is VKSFTTTLPW…LSTGLEVPGA (71 aa). Residues Asn192 and Asn197 are each glycosylated (N-linked (GlcNAc...) asparagine). A helical membrane pass occupies residues 231–251; that stretch reads LNWEVTLCLLACWVLVYFCVW. Residues 252–269 are Cytoplasmic-facing; that stretch reads KGVKSTGKIVYFTATFPY. A helical transmembrane segment spans residues 270 to 290; that stretch reads VVLVVLLVRGVLLPGALDGII. The Extracellular portion of the chain corresponds to 291–304; that stretch reads YYLKPDWSKLGSPQ. The helical transmembrane segment at 305–325 threads the bilayer; that stretch reads VWIDAGTQIFFSYAIGLGALT. Residues 326-341 lie on the Cytoplasmic side of the membrane; the sequence is ALGSYNRFNNNCYKDA. A helical membrane pass occupies residues 342–362; sequence IILALINSGTSFFAGFVVFSI. Residues 363 to 394 lie on the Extracellular side of the membrane; that stretch reads LGFMATEQGVHISKVAESGPGLAFIAYPRAVT. The chain crosses the membrane as a helical span at residues 395–415; the sequence is LMPVAPLWAALFFFMLLLLGL. Residues 416–444 lie on the Cytoplasmic side of the membrane; it reads DSQFVGVEGFITGLLDLLPASYYFRFQRE. A helical transmembrane segment spans residues 445-465; that stretch reads ISVALCCALCFVIDLSMVTDG. Topologically, residues 466 to 479 are extracellular; that stretch reads GMYVFQLFDYYSAS. Residues 480-500 traverse the membrane as a helical segment; sequence GTTLLWQAFWECVVVAWVYGA. The Cytoplasmic portion of the chain corresponds to 501 to 520; the sequence is DRFMDDIACMIGYRPCPWMK. The helical transmembrane segment at 521–541 threads the bilayer; that stretch reads WCWSFFTPLVCMGIFIFNIVY. The Extracellular portion of the chain corresponds to 542-560; it reads YEPLVYNNTYVYPWWGEAM. A glycan (N-linked (GlcNAc...) asparagine) is linked at Asn548. The chain crosses the membrane as a helical span at residues 561–581; the sequence is GWAFALSSMLCVPLHLLGCLL. The Cytoplasmic portion of the chain corresponds to 582 to 635; the sequence is RAKGTMAERWQHLTQPIWGLHHLEYRAQDADVRGLTTLTPVSESSKVVVVESVM. Residues Thr617 and Thr620 each carry the phosphothreonine modification. Ser623 is subject to Phosphoserine.

It belongs to the sodium:neurotransmitter symporter (SNF) (TC 2.A.22) family. SLC6A8 subfamily. Glycosylated. As to expression, brain. Highly expressed in brain capillaries branching in all cortical layers and moderately expressed in neuronal perikarya (at protein level).

Its subcellular location is the cell membrane. The protein localises to the apical cell membrane. It carries out the reaction creatine(out) + chloride(out) + 2 Na(+)(out) = creatine(in) + chloride(in) + 2 Na(+)(in). Its function is as follows. Creatine:sodium symporter which mediates the uptake of creatine. Plays an important role in supplying creatine to the brain via the blood-brain barrier. This chain is Sodium- and chloride-dependent creatine transporter 1 (Slc6a8), found in Mus musculus (Mouse).